The primary structure comprises 139 residues: D-ribose pyranase (139 aa).

Residue His20 is the Proton donor of the active site. Residues Asp28, His106, and 128–130 each bind substrate; that span reads YAN.

It belongs to the RbsD / FucU family. RbsD subfamily. As to quaternary structure, homodecamer.

The protein resides in the cytoplasm. The catalysed reaction is beta-D-ribopyranose = beta-D-ribofuranose. It functions in the pathway carbohydrate metabolism; D-ribose degradation; D-ribose 5-phosphate from beta-D-ribopyranose: step 1/2. Its function is as follows. Catalyzes the interconversion of beta-pyran and beta-furan forms of D-ribose. The sequence is that of D-ribose pyranase from Photobacterium profundum (strain SS9).